The chain runs to 274 residues: Long chain fatty acid elongase 6 (274 aa).

The Extracellular portion of the chain corresponds to 1–30 (MPQGEVSFFEVLTTAPFSHELSKKHIAQTQ). A helical membrane pass occupies residues 31-51 (YAAFWISMAYVVVIFGLKAVM). Residues 52–69 (TNRKPFDLTGPLNLWNAG) are Cytoplasmic-facing. Residues 70 to 90 (LAIFSTLGSLATTFGLLHEFF) traverse the membrane as a helical segment. The Extracellular portion of the chain corresponds to 91-111 (SRGFFESYIHIGDFYNGLSGM). A helical membrane pass occupies residues 112 to 132 (FTWLFVLSKVAEFGDTLFIIL). Over 133 to 135 (RKK) the chain is Cytoplasmic. Residues 136–156 (PLMFLHWYHHVLTMNYAFMSF) traverse the membrane as a helical segment. Residues 157–159 (EAN) are Extracellular-facing. The helical transmembrane segment at 160 to 180 (LGFNTWITWMNFSVHSIMYGY) threads the bilayer. At 181–202 (YMLRSFGVKVPAWIAKNITTMQ) the chain is on the cytoplasmic side. Residues 203-223 (ILQFVITHFILFHVGYLAVTG) form a helical membrane-spanning segment. Residues 224–230 (QSVDSTP) are Extracellular-facing. A helical transmembrane segment spans residues 231–251 (GYYWFCLLMEISYVVLFGNFY). The Cytoplasmic portion of the chain corresponds to 252–274 (YQSYIKGGGKKFNAEKKTEKKIE).

Belongs to the ELO family. Expressed in the gut, neurons, pharynx and muscles of the vulva.

Its subcellular location is the membrane. The catalysed reaction is isopentadecanoyl-CoA + malonyl-CoA + H(+) = 3-oxoisoheptadecanoyl-CoA + CO2 + CoA. It participates in lipid metabolism; fatty acid biosynthesis. Its function is as follows. Catalyzes the first and rate-limiting reaction of the four reactions that constitute the long-chain fatty acids elongation cycle. Uses malonyl-CoA to add 2 carbons per cycle to the chain of long-chain fatty acids. Condensing enzyme required for the formation of isoheptadecanoate (C17iso), which plays critical roles in animal development and growth. The protein is Long chain fatty acid elongase 6 (elo-6) of Caenorhabditis elegans.